The chain runs to 293 residues: Formamidopyrimidine-DNA glycosylase (293 aa).

The Schiff-base intermediate with DNA role is filled by Pro2. Catalysis depends on Glu3, which acts as the Proton donor. Lys58 serves as the catalytic Proton donor; for beta-elimination activity. DNA-binding residues include His104, Arg123, and Lys166. Residues 257 to 293 (KVYDREGETCKTPACGGTIKRFTQNGRSTFWCPKCQK) form an FPG-type zinc finger. The active-site Proton donor; for delta-elimination activity is the Arg283.

Belongs to the FPG family. Monomer. The cofactor is Zn(2+).

It catalyses the reaction Hydrolysis of DNA containing ring-opened 7-methylguanine residues, releasing 2,6-diamino-4-hydroxy-5-(N-methyl)formamidopyrimidine.. It carries out the reaction 2'-deoxyribonucleotide-(2'-deoxyribose 5'-phosphate)-2'-deoxyribonucleotide-DNA = a 3'-end 2'-deoxyribonucleotide-(2,3-dehydro-2,3-deoxyribose 5'-phosphate)-DNA + a 5'-end 5'-phospho-2'-deoxyribonucleoside-DNA + H(+). Functionally, involved in base excision repair of DNA damaged by oxidation or by mutagenic agents. Acts as a DNA glycosylase that recognizes and removes damaged bases. Has a preference for oxidized purines, such as 7,8-dihydro-8-oxoguanine (8-oxoG). Has AP (apurinic/apyrimidinic) lyase activity and introduces nicks in the DNA strand. Cleaves the DNA backbone by beta-delta elimination to generate a single-strand break at the site of the removed base with both 3'- and 5'-phosphates. The polypeptide is Formamidopyrimidine-DNA glycosylase (Bradyrhizobium diazoefficiens (strain JCM 10833 / BCRC 13528 / IAM 13628 / NBRC 14792 / USDA 110)).